The sequence spans 415 residues: Packaging protein 3 (415 aa).

The interval 1 to 55 (MHPVLRQMRPPPQQRQEQEQRQTCRAPSPPPTASGGATSAVDAAADGDYEPPRRR) is disordered. The interaction with packaging protein 1 stretch occupies residues 1 to 173 (MHPVLRQMRP…VNQEINFQKS (173 aa)). Phosphoserine; by host is present on residues Ser75 and Ser360. A compositionally biased stretch (low complexity) spans 381 to 394 (GAGPGLAVAPARAG). The tract at residues 381–415 (GAGPGLAVAPARAGNVGGVEEYDEDDEYEPEDGEY) is disordered. The span at 400–415 (EEYDEDDEYEPEDGEY) shows a compositional bias: acidic residues.

Belongs to the adenoviridae packaging protein 3 family. Part of the genome packaging complex composed of packaging proteins 1, 2 and 3; this complex specifically binds to the packaging sequence on the left end of viral genomic DNA and performs packaging of the viral genome. Interacts with hexon-linking protein IIIa; this interaction is required to promote correct genome packaging. Cleaved at different sites by the viral protease during virion maturation.

It localises to the host nucleus. In terms of biological role, involved in viral genome packaging through its interaction with packaging proteins 1 and 2. After proteolytic cleavage by adenovirus protease, L1 52/55k protein is removed from the capsid during viral maturation. This Homo sapiens (Human) protein is Packaging protein 3.